The chain runs to 518 residues: Glutamate--cysteine ligase (518 aa).

The protein belongs to the glutamate--cysteine ligase type 1 family. Type 1 subfamily.

The catalysed reaction is L-cysteine + L-glutamate + ATP = gamma-L-glutamyl-L-cysteine + ADP + phosphate + H(+). It functions in the pathway sulfur metabolism; glutathione biosynthesis; glutathione from L-cysteine and L-glutamate: step 1/2. The polypeptide is Glutamate--cysteine ligase (Shigella boydii serotype 4 (strain Sb227)).